Here is a 434-residue protein sequence, read N- to C-terminus: GTPase Obg (434 aa).

Residues 1–159 (MQFIDRCQIK…KTVRLELKYL (159 aa)) form the Obg domain. Residues 160-329 (ANVGIVGYPN…LVDRVFDLYQ (170 aa)) enclose the OBG-type G domain. Residues 166–173 (GYPNAGKS), 191–195 (FTTLV), 212–215 (DIPG), 282–285 (NKMD), and 310–312 (ISA) contribute to the GTP site. The Mg(2+) site is built by S173 and T193. Positions 356 to 434 (EKTIDDDPLD…ICDYEYLIDE (79 aa)) constitute an OCT domain.

Belongs to the TRAFAC class OBG-HflX-like GTPase superfamily. OBG GTPase family. As to quaternary structure, monomer. The cofactor is Mg(2+).

It is found in the cytoplasm. An essential GTPase which binds GTP, GDP and possibly (p)ppGpp with moderate affinity, with high nucleotide exchange rates and a fairly low GTP hydrolysis rate. Plays a role in control of the cell cycle, stress response, ribosome biogenesis and in those bacteria that undergo differentiation, in morphogenesis control. In Mycoplasmoides gallisepticum (strain R(low / passage 15 / clone 2)) (Mycoplasma gallisepticum), this protein is GTPase Obg.